The primary structure comprises 134 residues: MVVAPYLAVAIGGSLGAMSRYLVTIMAQNAWGIKFPYGTLLVNTLGSFLAGFFLIVLVGRFSAEESFRLFLFTGFLGAFTTFSSFAAESLFMFEQGYWFKLITNILVNNVGSLSMVFVGTLVAKYVLLGHQGSN.

4 helical membrane-spanning segments follow: residues 7 to 27 (LAVA…TIMA), 38 to 58 (GTLL…IVLV), 69 to 89 (LFLF…AAES), and 110 to 130 (VGSL…LLGH). Residues glycine 77 and threonine 80 each contribute to the Na(+) site.

The protein belongs to the fluoride channel Fluc/FEX (TC 1.A.43) family.

The protein resides in the cell inner membrane. The enzyme catalyses fluoride(in) = fluoride(out). Na(+) is not transported, but it plays an essential structural role and its presence is essential for fluoride channel function. Its function is as follows. Fluoride-specific ion channel. Important for reducing fluoride concentration in the cell, thus reducing its toxicity. This is Fluoride-specific ion channel FluC from Legionella pneumophila (strain Lens).